Consider the following 228-residue polypeptide: Probable septum site-determining protein MinC (228 aa).

It belongs to the MinC family. As to quaternary structure, interacts with MinD and FtsZ.

Its function is as follows. Cell division inhibitor that blocks the formation of polar Z ring septums. Rapidly oscillates between the poles of the cell to destabilize FtsZ filaments that have formed before they mature into polar Z rings. Prevents FtsZ polymerization. The chain is Probable septum site-determining protein MinC from Bacillus anthracis (strain A0248).